Here is a 232-residue protein sequence, read N- to C-terminus: Zinc finger protein RTS2 (232 aa).

The C2H2-type zinc-finger motif lies at 24–48 (YYCQICQRQCKDANGFQSHNKSPSH). Disordered regions lie at residues 180 to 199 (AKRQ…ISGD) and 211 to 232 (GNGR…IKFR).

It localises to the nucleus. This chain is Zinc finger protein RTS2 (RTS2), found in Saccharomyces cerevisiae (strain ATCC 204508 / S288c) (Baker's yeast).